The sequence spans 406 residues: ATP phosphoribosyltransferase regulatory subunit (406 aa).

It belongs to the class-II aminoacyl-tRNA synthetase family. HisZ subfamily. Heteromultimer composed of HisG and HisZ subunits.

It localises to the cytoplasm. The protein operates within amino-acid biosynthesis; L-histidine biosynthesis; L-histidine from 5-phospho-alpha-D-ribose 1-diphosphate: step 1/9. Required for the first step of histidine biosynthesis. May allow the feedback regulation of ATP phosphoribosyltransferase activity by histidine. This is ATP phosphoribosyltransferase regulatory subunit from Methylococcus capsulatus (strain ATCC 33009 / NCIMB 11132 / Bath).